A 41-amino-acid chain; its full sequence is Putative toxic protein TimP (41 aa).

The chain crosses the lipid bilayer at residues 1–17 (MKIRCFCIVLIVSGALL).

Belongs to the TimP toxin family.

It localises to the cell inner membrane. Its function is as follows. Putative toxic component of a potential type I toxin-antitoxin (TA) system. Neutralized by sRNA antitoxin TimR which binds to the 5' UTR of timP mRNA and inhibits translation. The antitoxin gene is encoded immediately upstream and transcribed divergently from the toxin gene; antitoxin RNA is less stable than timP mRNA. The sequence is that of Putative toxic protein TimP from Escherichia coli (strain K12).